Consider the following 798-residue polypeptide: Pentatricopeptide repeat-containing protein At5g67570, chloroplastic (798 aa).

Disordered regions lie at residues 1-21 (MDAS…EFEP) and 50-73 (IQKH…EAQK). PPR repeat units follow at residues 254-284 (SRFV…MLGD), 290-324 (DMAA…PTKL), 340-374 (DLVV…GLRP), 375-409 (NGAT…GEAP), 410-444 (KAIT…GVIG), 445-480 (TGSV…NCRP), 481-511 (LEIT…MKDK), 515-545 (NIGT…IVSR), 553-587 (NEYT…GYQM), and 588-622 (DQTK…GEIP).

The protein belongs to the PPR family. P subfamily. Interacts (via C-terminus) with SIGF (via N-terminus).

It is found in the plastid. Its subcellular location is the chloroplast. Functionally, involved in the regulation of early chloroplast development and chloroplast gene expression in a SIGF-dependent manner. The protein is Pentatricopeptide repeat-containing protein At5g67570, chloroplastic (DG1) of Arabidopsis thaliana (Mouse-ear cress).